The sequence spans 297 residues: Mitochondrial thiamine pyrophosphate carrier 1 (297 aa).

Solcar repeat units lie at residues 13 to 94 (SHVF…TNAA), 102 to 195 (PPTI…IRAR), and 196 to 295 (WPET…LMRV). A run of 6 helical transmembrane segments spans residues 19 to 36 (LVSGAIAGLAARSAIAPL), 75 to 91 (IMYIIYGSVQFGTYSYT), 109 to 128 (LAGAITGMASSLCSYPFDVL), 163 to 187 (GLGGFFHGVATSMANVTVSTAAMFG), 203 to 219 (TAGAISGVISRTITFPL), and 270 to 287 (GIGLGLLKSVPNTAINLW).

Belongs to the mitochondrial carrier (TC 2.A.29) family.

It localises to the mitochondrion inner membrane. Its function is as follows. Mitochondrial transporter that mediates uptake of thiamine pyrophosphate (ThPP) into mitochondria. This is Mitochondrial thiamine pyrophosphate carrier 1 (TPC1) from Vanderwaltozyma polyspora (strain ATCC 22028 / DSM 70294 / BCRC 21397 / CBS 2163 / NBRC 10782 / NRRL Y-8283 / UCD 57-17) (Kluyveromyces polysporus).